Consider the following 324-residue polypeptide: Delta-aminolevulinic acid dehydratase (324 aa).

The Zn(2+) site is built by Cys-118, Cys-120, and Cys-128. Lys-195 acts as the Schiff-base intermediate with substrate in catalysis. 5-aminolevulinate is bound by residues Arg-205 and Arg-217. A Mg(2+)-binding site is contributed by Glu-233. Lys-248 serves as the catalytic Schiff-base intermediate with substrate. Positions 274 and 313 each coordinate 5-aminolevulinate.

Belongs to the ALAD family. Homooctamer. Zn(2+) serves as cofactor.

It catalyses the reaction 2 5-aminolevulinate = porphobilinogen + 2 H2O + H(+). Its pathway is porphyrin-containing compound metabolism; protoporphyrin-IX biosynthesis; coproporphyrinogen-III from 5-aminolevulinate: step 1/4. Functionally, catalyzes an early step in the biosynthesis of tetrapyrroles. Binds two molecules of 5-aminolevulinate per subunit, each at a distinct site, and catalyzes their condensation to form porphobilinogen. The chain is Delta-aminolevulinic acid dehydratase (hemB) from Staphylococcus epidermidis (strain ATCC 12228 / FDA PCI 1200).